Consider the following 86-residue polypeptide: Small ribosomal subunit protein bS20 (86 aa).

The protein belongs to the bacterial ribosomal protein bS20 family.

Functionally, binds directly to 16S ribosomal RNA. The polypeptide is Small ribosomal subunit protein bS20 (Bifidobacterium longum (strain DJO10A)).